Consider the following 290-residue polypeptide: UPF0750 membrane protein YpjC (290 aa).

Transmembrane regions (helical) follow at residues 9–29 (NIFF…HFNM), 47–67 (ALFH…IFFI), 75–95 (TMFV…SIFQ), 106–126 (DLAL…GIIF), 146–166 (FGIP…ILSL), and 179–199 (LVAV…GYAA).

It belongs to the UPF0750 family.

The protein resides in the cell membrane. This Bacillus subtilis (strain 168) protein is UPF0750 membrane protein YpjC (ypjC).